Reading from the N-terminus, the 171-residue chain is UPF0398 protein SEQ_1788 (171 aa).

It belongs to the UPF0398 family.

In Streptococcus equi subsp. equi (strain 4047), this protein is UPF0398 protein SEQ_1788.